The sequence spans 586 residues: Phosphatidylinositol-3-phosphatase SAC1-B (586 aa).

At 1–519 the chain is on the cytoplasmic side; that stretch reads MASTYNSFNL…TPLHEPKDWK (519 aa). The region spanning 121–450 is the SAC domain; the sequence is LNSVLNTDGF…ANACAKQYAG (330 aa). Positions 451-586 are essential for phosphatidylinositol-4-phosphate phosphatase activity; sequence TGALKTDFTR…PRLVQKEKMD (136 aa). Residues 520-540 traverse the membrane as a helical segment; the sequence is FLTLPIIMVVAFSMCIICLLM. Residues 541-547 lie on the Lumenal side of the membrane; the sequence is AGDTWTE. Residues 548–568 traverse the membrane as a helical segment; sequence TLAYVLFWGSASVVTGGVILF. Over 569 to 586 the chain is Cytoplasmic; it reads NGRDFVDAPRLVQKEKMD.

The protein localises to the endoplasmic reticulum membrane. It localises to the golgi apparatus membrane. The enzyme catalyses a 1,2-diacyl-sn-glycero-3-phospho-(1D-myo-inositol-3-phosphate) + H2O = a 1,2-diacyl-sn-glycero-3-phospho-(1D-myo-inositol) + phosphate. It carries out the reaction a 1,2-diacyl-sn-glycero-3-phospho-(1D-myo-inositol 4-phosphate) + H2O = a 1,2-diacyl-sn-glycero-3-phospho-(1D-myo-inositol) + phosphate. Phosphoinositide phosphatase which catalyzes the hydrolysis of phosphatidylinositol 4-phosphate (PtdIns(4)P), phosphatidylinositol 3-phosphate (PtdIns(3)P) and has low activity towards phosphatidylinositol-3,5-bisphosphate (PtdIns(3,5)P2). The sequence is that of Phosphatidylinositol-3-phosphatase SAC1-B (sacm1lb) from Danio rerio (Zebrafish).